The chain runs to 578 residues: NADPH oxidase 4 (578 aa).

Topologically, residues 1-16 (MALSWRSWLANEGVKH) are cytoplasmic. The chain crosses the membrane as a helical span at residues 17–37 (LCLLVWLSLNVLLFWKTFLLY). Over 38 to 62 (NQGPEYYYIHQMLGLGLCLSRASAS) the chain is Extracellular. A Ferric oxidoreductase domain is found at 58 to 303 (RASASVLNLN…YCAERLYRCI (246 aa)). The chain crosses the membrane as a helical span at residues 63-83 (VLNLNCSLILLPMCRTVLAYL). At 84–104 (RGSQKVPSRRTRRLLDKSKTL) the chain is on the cytoplasmic side. The chain crosses the membrane as a helical span at residues 105–125 (HITCGITICIFSGVHVAAHLV). Residues 126–154 (NALNFSVNYSEHFLALNAARYQNEDPRKL) are Extracellular-facing. N-linked (GlcNAc...) asparagine glycosylation occurs at Asn133. Residues 155-175 (LFTTVPGLTGVCMVVVLFLMV) form a helical membrane-spanning segment. Over 176–188 (TASTYAIRVSNYD) the chain is Cytoplasmic. The helical transmembrane segment at 189–209 (IFWYTHNLFFVFYMLLLLHVS) threads the bilayer. Topologically, residues 210-424 (GGLLKYQTNL…SPFEESLNYE (215 aa)) are extracellular. Positions 218 to 273 (NLDTHPPGCISLNRTPSQNMSIADYVSEHFHGSLPGGFSKLEDHYQKTLVKICLEE) are E-loop; essential for H2O2 generating catalytic activity. Residues 248 to 575 (HGSLPGGFSK…YGTKFEYNKE (328 aa)) are mediates interaction with TLR4. The 116-residue stretch at 304-419 (RSNKPVTIIS…DGPFGSPFEE (116 aa)) folds into the FAD-binding FR-type domain. A helical transmembrane segment spans residues 425-445 (VSLCVAGGIGVTPFASILNTL). Residues 446–578 (LDDWKPYKLR…KFEYNKESFS (133 aa)) are Cytoplasmic-facing.

In terms of assembly, interacts with TLR4. Interacts with, relocalizes and stabilizes CYBA/p22phox. Interacts with protein disulfide isomerase. Interacts with PPP1R15A. Interacts with LRRC8A; this interaction prevents the ubiquitin-mediated degradation of LRRC8A. Requires heme as cofactor. Post-translationally, N-glycosylation is required for the function. As to expression, expressed in vascular smooth muscle.

It localises to the cytoplasm. It is found in the endoplasmic reticulum membrane. The protein localises to the cell membrane. The protein resides in the cell junction. Its subcellular location is the focal adhesion. It localises to the nucleus. The catalysed reaction is NADPH + 2 O2 = 2 superoxide + NADP(+) + H(+). It catalyses the reaction NADPH + O2 + H(+) = H2O2 + NADP(+). With respect to regulation, activated by insulin. Inhibited by diphenylene iodonium. Inhibited by plumbagin. Activated by phorbol 12-myristate 13-acetate (PMA). In terms of biological role, NADPH oxidase that catalyzes predominantly the reduction of oxygen to H2O2. Can also catalyze to a smaller extent, the reduction of oxygen to superoxide. May function as an oxygen sensor regulating the KCNK3/TASK-1 potassium channel and HIF1A activity. May regulate insulin signaling cascade. May play a role in apoptosis, bone resorption and lipolysaccharide-mediated activation of NFKB. May produce superoxide in the nucleus and play a role in regulating gene expression upon cell stimulation. Promotes ferroptosis, reactive oxygen species production and reduced glutathione (GSH) levels by activating NLRP3 inflammasome activation and cytokine release. The chain is NADPH oxidase 4 (Nox4) from Rattus norvegicus (Rat).